Here is a 327-residue protein sequence, read N- to C-terminus: Phenylalanine--tRNA ligase alpha subunit (327 aa).

E252 lines the Mg(2+) pocket.

This sequence belongs to the class-II aminoacyl-tRNA synthetase family. Phe-tRNA synthetase alpha subunit type 1 subfamily. As to quaternary structure, tetramer of two alpha and two beta subunits. Mg(2+) is required as a cofactor.

It is found in the cytoplasm. The catalysed reaction is tRNA(Phe) + L-phenylalanine + ATP = L-phenylalanyl-tRNA(Phe) + AMP + diphosphate + H(+). The polypeptide is Phenylalanine--tRNA ligase alpha subunit (Shigella flexneri).